Consider the following 745-residue polypeptide: Kinesin-like protein KIN-14M (745 aa).

The tract at residues 1 to 31 (MVGEMTNNGRIRPSFPVKDLTSNEGSEYGGP) is disordered. The globular stretch occupies residues 1-35 (MVGEMTNNGRIRPSFPVKDLTSNEGSEYGGPVEFT). Microtubule-binding regions lie at residues 65-77 (YVKR…RWFQ) and 198-745 (SLQL…LSLG). 2 coiled-coil regions span residues 76–223 (FQEL…GEKE) and 259–389 (KDEL…GNIR). One can recognise a Kinesin motor domain in the interval 387–724 (NIRVFCRVRP…LRFAARVNAC (338 aa)). Position 472–479 (472–479 (GQTGSGKT)) interacts with ATP.

This sequence belongs to the TRAFAC class myosin-kinesin ATPase superfamily. Kinesin family. KIN-14 subfamily. Bind to microtubules in an ATP-insensitive manner (in vitro). Homodimer and heterodimer with KIN14N/KATC (in vitro).

It is found in the cytoplasm. It localises to the cytoskeleton. This is Kinesin-like protein KIN-14M from Arabidopsis thaliana (Mouse-ear cress).